Consider the following 154-residue polypeptide: Transcriptional repressor NrdR (154 aa).

The disordered stretch occupies residues 1–22 (MECPNCHKNASRVIDSRPSDEN). A zinc finger lies at 3 to 34 (CPNCHKNASRVIDSRPSDENRAIRRRRECENC). Residues 49 to 139 (LLVVKNDGTR…IYRQFKDVSG (91 aa)) enclose the ATP-cone domain.

It belongs to the NrdR family. Requires Zn(2+) as cofactor.

Its function is as follows. Negatively regulates transcription of bacterial ribonucleotide reductase nrd genes and operons by binding to NrdR-boxes. This is Transcriptional repressor NrdR from Lactobacillus johnsonii (strain CNCM I-12250 / La1 / NCC 533).